The sequence spans 488 residues: Ammonium transporter 1 member 1 (488 aa).

11 helical membrane-spanning segments follow: residues 47–69 (TYLLFSAYLVFSMQLGFAMLLAG), 90–109 (LFYYLFGFAFALGGPSNGFI), 129–148 (FLYQWAFAIAAAGITSGSIA), 153–175 (FVAYLIYSSFLTGFVYPVVSHWF), 195–217 (VIDFAGSGVVHMVGGIAGFYGAL), 238–257 (HSASLVVLGTFLLWFGWYGF), 281–303 (AVGRTAVTTTLAGCTAALTTLFG), 316–333 (VCNGLLGGFAAITAGCSV), 337–356 (WAAIICGFVAALVLIGFNML), 368–387 (AAQLHGGCGAWGIIFTGLFA), and 418–440 (HIIQILVIIGWVSATMGPLFYIL).

It belongs to the ammonia transporter channel (TC 1.A.11.2) family. As to expression, root hairs and leaves.

It is found in the membrane. Its function is as follows. Ammonium transporter that may be involved in ammonium uptake from the soil. The polypeptide is Ammonium transporter 1 member 1 (AMT1-1) (Solanum lycopersicum (Tomato)).